Here is a 519-residue protein sequence, read N- to C-terminus: Pleckstrin homology domain-containing family A member 8 (519 aa).

In terms of domain architecture, PH spans 1-93 (MEGVLYKWTN…WLVALGSAKA (93 aa)). Phosphothreonine is present on threonine 139. Phosphoserine is present on serine 145. A Phosphothreonine modification is found at threonine 153. The segment at 275-302 (GEENLESHDKDPAQPGSDSVCSPESPWE) is disordered. Residues 330–473 (IPTEAFLASC…EDFVAALTIK (144 aa)) are glycolipid transfer protein homology domain.

Homodimer. Interacts with ARF1; the interaction together with phosphatidylinositol 4-phosphate binding is required for FAPP2 GlcCer transfer ability.

It is found in the golgi apparatus. The protein localises to the trans-Golgi network membrane. Its subcellular location is the membrane. Functionally, cargo transport protein that is required for apical transport from the trans-Golgi network (TGN). Transports AQP2 from the trans-Golgi network (TGN) to sites of AQP2 phosphorylation. Mediates the non-vesicular transport of glucosylceramide (GlcCer) from the trans-Golgi network (TGN) to the plasma membrane and plays a pivotal role in the synthesis of complex glycosphingolipids. Binding of both phosphatidylinositol 4-phosphate (PIP) and ARF1 are essential for the GlcCer transfer ability. Also required for primary cilium formation, possibly by being involved in the transport of raft lipids to the apical membrane, and for membrane tubulation. This chain is Pleckstrin homology domain-containing family A member 8 (Plekha8), found in Mus musculus (Mouse).